The primary structure comprises 132 residues: Small ribosomal subunit protein uS8c (132 aa).

This sequence belongs to the universal ribosomal protein uS8 family. In terms of assembly, part of the 30S ribosomal subunit.

It localises to the plastid. It is found in the chloroplast. Functionally, one of the primary rRNA binding proteins, it binds directly to 16S rRNA central domain where it helps coordinate assembly of the platform of the 30S subunit. This Dioscorea elephantipes (Elephant's foot yam) protein is Small ribosomal subunit protein uS8c (rps8).